Consider the following 286-residue polypeptide: uncharacterized protein (286 aa).

Belongs to the NmrA-type oxidoreductase family.

This is an uncharacterized protein from Bacillus subtilis (strain 168).